Consider the following 283-residue polypeptide: Extracellular metalloprotease MGG_08041 (283 aa).

Residues 1 to 22 form the signal peptide; sequence MQINVVKTFLFALAASSVSALA. An N-linked (GlcNAc...) asparagine glycan is attached at Asn55. Zn(2+) is bound at residue His197. Glu198 is a catalytic residue. Zn(2+) is bound at residue His201. The cysteines at positions 233 and 260 are disulfide-linked.

Belongs to the peptidase M43B family.

The protein localises to the secreted. Functionally, secreted metalloproteinase that allows assimilation of proteinaceous substrates. The sequence is that of Extracellular metalloprotease MGG_08041 from Pyricularia oryzae (strain 70-15 / ATCC MYA-4617 / FGSC 8958) (Rice blast fungus).